We begin with the raw amino-acid sequence, 312 residues long: sn-1-specific diacylglycerol lipase ABHD11 (312 aa).

The transit peptide at 1–14 (MITFKSFHCSRGWH) directs the protein to the mitochondrion. Residues 62–297 (PPLVLLHGLF…GAGHWVHADK (236 aa)) enclose the AB hydrolase-1 domain. Residues serine 136, glutamate 232, and histidine 291 each act as charge relay system in the active site.

This sequence belongs to the AB hydrolase superfamily. In terms of processing, phosphorylated.

The protein localises to the mitochondrion. The protein resides in the mitochondrion matrix. It catalyses the reaction 1-octadecanoyl-2-(5Z,8Z,11Z,14Z-eicosatetraenoyl)-sn-glycerol + H2O = 2-(5Z,8Z,11Z,14Z-eicosatetraenoyl)-glycerol + octadecanoate + H(+). It carries out the reaction a 1,2-diacyl-sn-glycerol + H2O = a 2-acylglycerol + a fatty acid + H(+). The enzyme catalyses a 1,3-diacyl-sn-glycerol + H2O = a 1-acyl-sn-glycerol + a fatty acid + H(+). The catalysed reaction is 1-octadecanoyl-2-(9Z-octadecenoyl)-sn-glycerol + H2O = 2-(9Z-octadecenoyl)-glycerol + octadecanoate + H(+). It catalyses the reaction 1-octadecanoyl-2-(4Z,7Z,10Z,13Z,16Z,19Z-docosahexaenoyl)-sn-glycerol + H2O = 2-(4Z,7Z,10Z,13Z,16Z,19Z-docosahexaenoyl)-glycerol + octadecanoate + H(+). It carries out the reaction 1,2-didecanoylglycerol + H2O = decanoylglycerol + decanoate + H(+). Catalyzes the hydrolysis of diacylglycerol in vitro and may function as a key regulator in lipid metabolism, namely by regulating the intracellular levels of diacylglycerol. 1,2-diacyl-sn-glycerols are the preferred substrate over 1,3-diacyl-sn-glycerols. The enzyme hydrolyzes stearate in preference to palmitate from the sn-1 position of 1,2-diacyl-sn-glycerols. This Xenopus laevis (African clawed frog) protein is sn-1-specific diacylglycerol lipase ABHD11.